A 298-amino-acid polypeptide reads, in one-letter code: Diphthine methyl ester synthase (298 aa).

S-adenosyl-L-methionine contacts are provided by residues L9, D85, G88, 113–114, L164, L222, and H247; that span reads SV.

This sequence belongs to the diphthine synthase family.

It is found in the cytoplasm. The enzyme catalyses 2-[(3S)-amino-3-carboxypropyl]-L-histidyl-[translation elongation factor 2] + 4 S-adenosyl-L-methionine = diphthine methyl ester-[translation elongation factor 2] + 4 S-adenosyl-L-homocysteine + 3 H(+). It participates in protein modification; peptidyl-diphthamide biosynthesis. S-adenosyl-L-methionine-dependent methyltransferase that catalyzes four methylations of the modified target histidine residue in translation elongation factor 2 (EF-2), to form an intermediate called diphthine methyl ester. The four successive methylation reactions represent the second step of diphthamide biosynthesis. This Eremothecium gossypii (strain ATCC 10895 / CBS 109.51 / FGSC 9923 / NRRL Y-1056) (Yeast) protein is Diphthine methyl ester synthase (DPH5).